The following is a 535-amino-acid chain: Phosphoenolpyruvate carboxykinase (ATP) (535 aa).

Residues R59, Y201, and K207 each coordinate substrate. ATP-binding positions include K207, H226, and 243 to 251; that span reads GLSGTGKTT. Mn(2+)-binding residues include K207 and H226. D264 serves as a coordination point for Mn(2+). Residues E292, R328, 444–445, and T450 each bind ATP; that span reads RI. Residue R328 participates in substrate binding.

It belongs to the phosphoenolpyruvate carboxykinase (ATP) family. The cofactor is Mn(2+).

Its subcellular location is the cytoplasm. The catalysed reaction is oxaloacetate + ATP = phosphoenolpyruvate + ADP + CO2. The protein operates within carbohydrate biosynthesis; gluconeogenesis. Involved in the gluconeogenesis. Catalyzes the conversion of oxaloacetate (OAA) to phosphoenolpyruvate (PEP) through direct phosphoryl transfer between the nucleoside triphosphate and OAA. The protein is Phosphoenolpyruvate carboxykinase (ATP) of Bacteroides thetaiotaomicron (strain ATCC 29148 / DSM 2079 / JCM 5827 / CCUG 10774 / NCTC 10582 / VPI-5482 / E50).